Consider the following 466-residue polypeptide: UDP-N-acetylmuramoylalanine--D-glutamate ligase (466 aa).

Residue Gly-121 to Thr-127 participates in ATP binding.

It belongs to the MurCDEF family.

Its subcellular location is the cytoplasm. It carries out the reaction UDP-N-acetyl-alpha-D-muramoyl-L-alanine + D-glutamate + ATP = UDP-N-acetyl-alpha-D-muramoyl-L-alanyl-D-glutamate + ADP + phosphate + H(+). It participates in cell wall biogenesis; peptidoglycan biosynthesis. In terms of biological role, cell wall formation. Catalyzes the addition of glutamate to the nucleotide precursor UDP-N-acetylmuramoyl-L-alanine (UMA). The protein is UDP-N-acetylmuramoylalanine--D-glutamate ligase of Nitrobacter hamburgensis (strain DSM 10229 / NCIMB 13809 / X14).